The chain runs to 135 residues: Protein NrdI (135 aa).

This sequence belongs to the NrdI family.

In terms of biological role, probably involved in ribonucleotide reductase function. This is Protein NrdI from Salmonella gallinarum (strain 287/91 / NCTC 13346).